The following is a 150-amino-acid chain: MQIILLEKIGGLGNLGDIVTVKNGYARNFLIPAGKAKRATEANMKEFEARRAELEAKQAEILADARVRQEKLDGQTVTVAQKAGVDGRLFGSVTNADIAAAIVAAGIEAVKANVRLPNGPLKAVGEYEVEVALHTDAVAKITVAVVAATE.

It belongs to the bacterial ribosomal protein bL9 family.

Functionally, binds to the 23S rRNA. In Neisseria meningitidis serogroup B (strain ATCC BAA-335 / MC58), this protein is Large ribosomal subunit protein bL9.